The primary structure comprises 89 residues: Small ribosomal subunit protein uS15 (89 aa).

The protein belongs to the universal ribosomal protein uS15 family. As to quaternary structure, part of the 30S ribosomal subunit. Forms a bridge to the 50S subunit in the 70S ribosome, contacting the 23S rRNA.

One of the primary rRNA binding proteins, it binds directly to 16S rRNA where it helps nucleate assembly of the platform of the 30S subunit by binding and bridging several RNA helices of the 16S rRNA. In terms of biological role, forms an intersubunit bridge (bridge B4) with the 23S rRNA of the 50S subunit in the ribosome. The protein is Small ribosomal subunit protein uS15 of Vibrio cholerae serotype O1 (strain ATCC 39541 / Classical Ogawa 395 / O395).